A 715-amino-acid chain; its full sequence is Protein Hook homolog 1 (715 aa).

Positions T6–A122 constitute a Calponin-homology (CH) domain. Coiled coils occupy residues A167–L434 and I463–L656.

The protein belongs to the hook family. As to quaternary structure, interacts with microtubules.

Its subcellular location is the cytoplasm. It localises to the cytoskeleton. Its function is as follows. May function to promote vesicle trafficking and/or fusion. This Danio rerio (Zebrafish) protein is Protein Hook homolog 1 (hook1).